A 749-amino-acid polypeptide reads, in one-letter code: DNA topoisomerase 1 (749 aa).

Positions 1–110 (MSDSEDVALS…PKKEDSVETD (110 aa)) are disordered. Positions 62–75 (LSKEKVNNKVKDEL) are enriched in basic and acidic residues. The segment covering 79–94 (PVTPKKTPKISKTPVS) has biased composition (low complexity). The span at 101–110 (PKKEDSVETD) shows a compositional bias: basic and acidic residues. Interaction with DNA stretches follow at residues 338-339 (KY), 401-406 (RAGGEK), and 493-495 (TAK). Residues 345-749 (NSSIKGISDM…IESTDENWRF (405 aa)) form the Topo IB-type catalytic domain. Tyrosine 707 (O-(3'-phospho-DNA)-tyrosine intermediate) is an active-site residue.

Belongs to the type IB topoisomerase family.

It is found in the nucleus. The protein localises to the nucleolus. Its subcellular location is the nucleoplasm. The catalysed reaction is ATP-independent breakage of single-stranded DNA, followed by passage and rejoining.. In terms of biological role, releases the supercoiling and torsional tension of DNA introduced during the DNA replication and transcription by transiently cleaving and rejoining one strand of the DNA duplex. Introduces a single-strand break via transesterification at the specific target site 5'-[CT]CCTTp site in duplex DNA. The scissile phosphodiester is attacked by the catalytic tyrosine of the enzyme, resulting in the formation of a DNA-(3'-phosphotyrosyl)-enzyme intermediate and the expulsion of a 5'-OH DNA strand. The free DNA strand then undergoes passage around the unbroken strand thus removing DNA supercoils. Finally, in the religation step, the DNA 5'-OH attacks the covalent intermediate to expel the active-site tyrosine and restore the DNA phosphodiester backbone. This Candidozyma auris (Yeast) protein is DNA topoisomerase 1 (TOP1).